The chain runs to 251 residues: Ribonuclease 3 (251 aa).

Residues 3–125 enclose the RNase III domain; that stretch reads LATLETRLGH…LFGAVFLDAG (123 aa). Glu-38 contributes to the Mg(2+) binding site. The active site involves Asp-42. Asp-111 and Glu-114 together coordinate Mg(2+). The active site involves Glu-114. The DRBM domain occupies 152–222; sequence DAKTLLQEFL…AKLALEAALV (71 aa).

This sequence belongs to the ribonuclease III family. In terms of assembly, homodimer. Mg(2+) serves as cofactor.

The protein resides in the cytoplasm. The catalysed reaction is Endonucleolytic cleavage to 5'-phosphomonoester.. Digests double-stranded RNA. Involved in the processing of primary rRNA transcript to yield the immediate precursors to the large and small rRNAs (23S and 16S). Processes some mRNAs, and tRNAs when they are encoded in the rRNA operon. Processes pre-crRNA and tracrRNA of type II CRISPR loci if present in the organism. The sequence is that of Ribonuclease 3 from Bordetella avium (strain 197N).